A 36-amino-acid polypeptide reads, in one-letter code: Pancreatic polypeptide (36 aa).

Y36 carries the post-translational modification Tyrosine amide.

It belongs to the NPY family.

The protein resides in the secreted. Functionally, hormone secreted by pancreatic cells that acts as a regulator of pancreatic and gastrointestinal functions probably by signaling through the G protein-coupled receptor NPY4R2. In Ceratotherium simum (White rhinoceros), this protein is Pancreatic polypeptide (PPY).